The sequence spans 320 residues: Reticulocalbin-2 (320 aa).

A signal peptide spans 1–25 (MRLGPRPAVLGLLLLLLLYAAVAGA). 2 EF-hand domains span residues 64–99 (EQQR…SFKH) and 100–135 (YAMQ…RVID). Asp-77, Asp-79, Asp-81, Glu-88, Asp-113, Asn-115, Asp-117, Thr-119, and Glu-124 together coordinate Ca(2+). Thr-140 carries the post-translational modification Phosphothreonine. EF-hand domains are found at residues 150-185 (FRQL…HPEE), 189-224 (MTEF…DPTA), 230-265 (WILV…NNQG), and 266-301 (IAQE…FLTS). Ca(2+) is bound by residues Asp-167, Glu-176, Asp-202, Asn-204, Asp-206, Glu-213, Asp-243, Asp-245, Asp-247, Arg-249, Glu-254, Asp-279, Asn-281, Asp-283, Lys-285, and Glu-290. Residues 317–320 (HDEL) carry the Prevents secretion from ER motif.

This sequence belongs to the CREC family. Binds the snake venom phospholipase complex taipoxin. As to expression, ubiquitous.

The protein resides in the endoplasmic reticulum lumen. Its function is as follows. Not known. Binds calcium. This is Reticulocalbin-2 (Rcn2) from Rattus norvegicus (Rat).